The chain runs to 180 residues: ADP ribosylation factor 4 (180 aa).

G2 carries N-myristoyl glycine lipidation. Residues 24–31, 67–71, and 126–129 contribute to the GTP site; these read GLDAAGKT, DVGGQ, and NKQD.

This sequence belongs to the small GTPase superfamily. Arf family. As to expression, uniformly distributed throughout adults.

The protein localises to the golgi apparatus. Functionally, GTP-binding protein involved in protein trafficking; may modulate vesicle budding and uncoating within the Golgi apparatus. The sequence is that of ADP ribosylation factor 4 from Drosophila melanogaster (Fruit fly).